The sequence spans 418 residues: Thyroxine-binding globulin (418 aa).

A signal peptide spans 1–20; sequence MSMFFYLFLLVLGLQATIHC. Residues Asn24, Asn39, Asn102, Asn168, Asn227, and Asn256 are each glycosylated (N-linked (GlcNAc...) asparagine). Residues Asn296 and Lys401 each contribute to the thyroxine site.

Belongs to the serpin family. As to expression, expressed by the liver and secreted in plasma.

Its subcellular location is the secreted. Functionally, major thyroid hormone transport protein in serum. In Rattus norvegicus (Rat), this protein is Thyroxine-binding globulin (Serpina7).